Consider the following 564-residue polypeptide: Proline--tRNA ligase (564 aa).

The protein belongs to the class-II aminoacyl-tRNA synthetase family. ProS type 1 subfamily. In terms of assembly, homodimer.

The protein resides in the cytoplasm. The enzyme catalyses tRNA(Pro) + L-proline + ATP = L-prolyl-tRNA(Pro) + AMP + diphosphate. In terms of biological role, catalyzes the attachment of proline to tRNA(Pro) in a two-step reaction: proline is first activated by ATP to form Pro-AMP and then transferred to the acceptor end of tRNA(Pro). As ProRS can inadvertently accommodate and process non-cognate amino acids such as alanine and cysteine, to avoid such errors it has two additional distinct editing activities against alanine. One activity is designated as 'pretransfer' editing and involves the tRNA(Pro)-independent hydrolysis of activated Ala-AMP. The other activity is designated 'posttransfer' editing and involves deacylation of mischarged Ala-tRNA(Pro). The misacylated Cys-tRNA(Pro) is not edited by ProRS. In Xanthomonas axonopodis pv. citri (strain 306), this protein is Proline--tRNA ligase.